The chain runs to 91 residues: Large ribosomal subunit protein bL31B (91 aa).

Belongs to the bacterial ribosomal protein bL31 family. Type B subfamily. Part of the 50S ribosomal subunit.

The sequence is that of Large ribosomal subunit protein bL31B from Neisseria meningitidis serogroup C (strain 053442).